A 940-amino-acid chain; its full sequence is Protein translocase subunit SecA (940 aa).

Residues Q85, 103–107 (GEGKT), and D505 each bind ATP. The segment at 851-940 (PVQDGAERPS…KGGGGRRRKK (90 aa)) is disordered. Positions 855–865 (GAERPSLEKEG) are enriched in basic and acidic residues. Residues 928-940 (RRRKGGGGRRRKK) show a composition bias toward basic residues.

This sequence belongs to the SecA family. Monomer and homodimer. Part of the essential Sec protein translocation apparatus which comprises SecA, SecYEG and auxiliary proteins SecDF. Other proteins may also be involved.

The protein resides in the cell membrane. The protein localises to the cytoplasm. It carries out the reaction ATP + H2O + cellular proteinSide 1 = ADP + phosphate + cellular proteinSide 2.. Its function is as follows. Part of the Sec protein translocase complex. Interacts with the SecYEG preprotein conducting channel. Has a central role in coupling the hydrolysis of ATP to the transfer of proteins into and across the cell membrane, serving as an ATP-driven molecular motor driving the stepwise translocation of polypeptide chains across the membrane. This is Protein translocase subunit SecA from Streptomyces griseus.